We begin with the raw amino-acid sequence, 284 residues long: 2,3,4,5-tetrahydropyridine-2,6-dicarboxylate N-succinyltransferase (284 aa).

Positions 111 and 148 each coordinate substrate.

It belongs to the transferase hexapeptide repeat family. As to quaternary structure, homotrimer.

It localises to the cytoplasm. The catalysed reaction is (S)-2,3,4,5-tetrahydrodipicolinate + succinyl-CoA + H2O = (S)-2-succinylamino-6-oxoheptanedioate + CoA. Its pathway is amino-acid biosynthesis; L-lysine biosynthesis via DAP pathway; LL-2,6-diaminopimelate from (S)-tetrahydrodipicolinate (succinylase route): step 1/3. The sequence is that of 2,3,4,5-tetrahydropyridine-2,6-dicarboxylate N-succinyltransferase from Mesorhizobium japonicum (strain LMG 29417 / CECT 9101 / MAFF 303099) (Mesorhizobium loti (strain MAFF 303099)).